Consider the following 130-residue polypeptide: Small ribosomal subunit protein uS9 (130 aa).

The protein belongs to the universal ribosomal protein uS9 family.

The sequence is that of Small ribosomal subunit protein uS9 from Vibrio atlanticus (strain LGP32) (Vibrio splendidus (strain Mel32)).